Here is a 370-residue protein sequence, read N- to C-terminus: Flagellar P-ring protein (370 aa).

The first 28 residues, 1-28, serve as a signal peptide directing secretion; it reads MTFFTRCFRRGALLFLLAVLLLPSPAQA.

The protein belongs to the FlgI family. As to quaternary structure, the basal body constitutes a major portion of the flagellar organelle and consists of four rings (L,P,S, and M) mounted on a central rod.

It localises to the periplasm. Its subcellular location is the bacterial flagellum basal body. Assembles around the rod to form the L-ring and probably protects the motor/basal body from shearing forces during rotation. The polypeptide is Flagellar P-ring protein (Oleidesulfovibrio alaskensis (strain ATCC BAA-1058 / DSM 17464 / G20) (Desulfovibrio alaskensis)).